The primary structure comprises 319 residues: Lambda-crystallin homolog (319 aa).

An N-acetylalanine modification is found at alanine 2. Phosphoserine is present on serine 3. Residues valine 16–isoleucine 17, aspartate 36, glutamate 97, and lysine 102 contribute to the NAD(+) site. Serine 111 carries the phosphoserine modification.

Belongs to the 3-hydroxyacyl-CoA dehydrogenase family. As to quaternary structure, homodimer. Widely expressed, with highest levels in liver and kidney.

It is found in the cytoplasm. It catalyses the reaction L-gulonate + NAD(+) = 3-dehydro-L-gulonate + NADH + H(+). With respect to regulation, inhibited by malonate. Has high L-gulonate 3-dehydrogenase activity. It also exhibits low dehydrogenase activity toward L-3-hydroxybutyrate (HBA) and L-threonate. The chain is Lambda-crystallin homolog (CRYL1) from Homo sapiens (Human).